The chain runs to 1019 residues: Katanin p80 WD40 repeat-containing subunit B1 homolog KTN80.1 (1019 aa).

WD repeat units lie at residues 13–53 (AHSG…SPMS), 56–95 (GHTS…MVRA), 98–137 (GHRS…CIQT), 140–181 (GHTR…HEFK), 183–221 (HEGP…LIGT), 224–264 (PEAT…DGVD), and 266–303 (GWST…LEPY). The DWD box motif lies at 114–130 (FLASGSSDTNLRVWDTR). 4 disordered regions span residues 388 to 424 (FGPA…TKSG), 455 to 474 (KSGL…LSEQ), 517 to 581 (IHRS…GSRE), and 607 to 652 (RGEK…RARS). The span at 465 to 474 (QTQNAFLSEQ) shows a compositional bias: polar residues. The span at 553–572 (IPSKTERVLSREKPGDEQKN) shows a compositional bias: basic and acidic residues. The segment covering 614–628 (TEGASTTIEQNNNAV) has biased composition (polar residues).

The protein belongs to the WD repeat KATNB1 family. Component of KTN80-KTN1 complexes composed of a hexamer of KTN1-KTN80 heterodimers that sense microtubule (MT) geometry to confer precise MT severing. Interacts directly with AAA1/KTN1 and KTN80.3, and weakly with KTN80.4. As to expression, expressed at low levels in siliques, flowers, leaves, stems and roots.

Its subcellular location is the cytoplasm. It is found in the cytoskeleton. In terms of biological role, may participate in a complex which severs microtubules in an ATP-dependent manner. Microtubule severing may promote rapid reorganization of cellular microtubule arrays. Confers precision to microtubule (MT) severing by specific targeting of KTN1 to MT cleavage sites such as crossover or branching nucleation sites. Together with other KTN80s, regulates cell elongation by modulating MT organization. This chain is Katanin p80 WD40 repeat-containing subunit B1 homolog KTN80.1, found in Arabidopsis thaliana (Mouse-ear cress).